The chain runs to 86 residues: Neurotoxin LmNaTx1 (86 aa).

A signal peptide spans M1 to S18. In terms of domain architecture, LCN-type CS-alpha/beta spans K19–G85. Disulfide bonds link C33/C84, C37/C58, C44/C65, and C48/C67. C84 is modified (cysteine amide).

This sequence belongs to the long (4 C-C) scorpion toxin superfamily. Sodium channel inhibitor family. Beta subfamily. In terms of tissue distribution, expressed by the venom gland.

The protein localises to the secreted. Binds voltage-independently at site-4 of sodium channels (Nav) and shift the voltage of activation toward more negative potentials thereby affecting sodium channel activation and promoting spontaneous and repetitive firing. This chain is Neurotoxin LmNaTx1, found in Lychas mucronatus (Chinese swimming scorpion).